Here is a 332-residue protein sequence, read N- to C-terminus: Anthranilate phosphoribosyltransferase (332 aa).

Residues G79, 82–83, S87, 89–92, 107–115, and S119 contribute to the 5-phospho-alpha-D-ribose 1-diphosphate site; these read GD, NIST, and KHGNRSVSS. G79 lines the anthranilate pocket. S91 lines the Mg(2+) pocket. Position 110 (N110) interacts with anthranilate. R165 lines the anthranilate pocket. Positions 223 and 224 each coordinate Mg(2+).

This sequence belongs to the anthranilate phosphoribosyltransferase family. Homodimer. Mg(2+) serves as cofactor.

The catalysed reaction is N-(5-phospho-beta-D-ribosyl)anthranilate + diphosphate = 5-phospho-alpha-D-ribose 1-diphosphate + anthranilate. It functions in the pathway amino-acid biosynthesis; L-tryptophan biosynthesis; L-tryptophan from chorismate: step 2/5. In terms of biological role, catalyzes the transfer of the phosphoribosyl group of 5-phosphorylribose-1-pyrophosphate (PRPP) to anthranilate to yield N-(5'-phosphoribosyl)-anthranilate (PRA). This chain is Anthranilate phosphoribosyltransferase, found in Erwinia tasmaniensis (strain DSM 17950 / CFBP 7177 / CIP 109463 / NCPPB 4357 / Et1/99).